Consider the following 376-residue polypeptide: Putative F-box protein At1g53370 (376 aa).

The F-box domain maps to R22–K71.

The chain is Putative F-box protein At1g53370 from Arabidopsis thaliana (Mouse-ear cress).